Here is a 497-residue protein sequence, read N- to C-terminus: MEQPPASKSKLKKLSEDSLTKQPEEVFDVLEKLGEGSYGSVFKAIHKESGQVVAIKQVPVESDLQEIIKEISIMQQCDSPYVVKYYGSYFKNTDLWIVMEYCGAGSVSDIIRLRNKTLTEDEIATILKSTLKGLEYLHFMRKIHRDIKAGNILLNTEGHAKLADFGVAGQLTDTMAKRNTVIGTPFWMAPEVIQEIGYNCVADIWSLGITSIEMAEGKPPYADIHPMRAIFMIPTNPPPTFRKPELWSDDFTDFVKKCLVKSPEQRATATQLLQHPFIKNAKPVSILRDLIAEAMEIKAKRHEEQQRELEEEEENSDEDELDSHTMVKTSSESVGTMRATSTMSEGAQTMIEHNSTMLESDLGTMVINSEEEEEEEEEEEEDGTMKRNATSPQVQRPSFMDYFDKQDFKNKSHENCDQSMREPGPMSNSVFPDNWRVPQDGDFDFLKNLSLEELQMRLKALDPMMEREIEELHQRYSAKRQPILDAMDAKKRRQQNF.

Met1 carries the N-acetylmethionine modification. The interval 1-20 (MEQPPASKSKLKKLSEDSLT) is disordered. Ser15 bears the Phosphoserine mark. A Protein kinase domain is found at 27 to 278 (FDVLEKLGEG…ATQLLQHPFI (252 aa)). Residues 33-41 (LGEGSYGSV) and Lys56 contribute to the ATP site. Phosphothreonine; by PKB/AKT1 is present on Thr117. Asp146 acts as the Proton acceptor in catalysis. Positions 151 and 164 each coordinate Mg(2+). Thr180 bears the Phosphothreonine; by autocatalysis mark. The stretch at 287 to 328 (LRDLIAEAMEIKAKRHEEQQRELEEEEENSDEDELDSHTMVK) forms a coiled coil. Disordered regions lie at residues 301–343 (RHEE…TSTM) and 368–394 (NSEEEEEEEEEEEEDGTMKRNATSPQV). Residues 309–321 (LEEEEENSDEDEL) show a composition bias toward acidic residues. Ser316 is modified (phosphoserine). The segment covering 326-343 (MVKTSSESVGTMRATSTM) has biased composition (polar residues). Thr336 carries the post-translational modification Phosphothreonine. The stretch at 366 to 387 (VINSEEEEEEEEEEEEDGTMKR) forms a coiled coil. Over residues 369 to 382 (SEEEEEEEEEEEED) the composition is skewed to acidic residues. At Thr384 the chain carries Phosphothreonine. Position 390 is a phosphothreonine; by PKB/AKT1 (Thr390). Residues Ser391 and Ser450 each carry the phosphoserine modification. The SARAH domain maps to 443-490 (FDFLKNLSLEELQMRLKALDPMMEREIEELHQRYSAKRQPILDAMDAK). A coiled-coil region spans residues 448-479 (NLSLEELQMRLKALDPMMEREIEELHQRYSAK).

This sequence belongs to the protein kinase superfamily. STE Ser/Thr protein kinase family. STE20 subfamily. In terms of assembly, homodimer; mediated via the coiled-coil region. Interacts with NORE1, which inhibits autoactivation. Interacts with and stabilizes SAV1. Interacts with RAF1, which prevents dimerization and phosphorylation. Interacts with RASSF1. Interacts (via SARAH domain) with isoform 1 of NEK2. Interacts with ESR1 only in the presence of SAV1. Interacts with PKB/AKT1. Forms a tripartite complex with MOBKL1B and STK38. Interacts with RASSF2 (via SARAH domain). Interacts with DLG5 (via PDZ domain 3). Interacts with LATS1; this interaction is inhibited in the presence of DLG5. Interacts with MARK3 in the presence of DLG5. Interacts with RASSF5; this interaction inhibits STK3 autoactivation through heterodimerization. Interacts (when phosphorylated) with SLMAP (via FHA domain); the interaction associates STK3 with the STRIPAK complex. The cofactor is Mg(2+). Autophosphorylated on two residues Thr-174 and Thr-180, leading to activation. Phosphorylation at Thr-117 and Thr-390 by PKB/AKT1, leads to inhibition of its: cleavage, kinase activity, autophosphorylation at Thr-180, binding to RASSF1 and nuclear translocation, and increase in its binding to RAF1. Phosphorylated at Ser-15 by PLK1, leading to activation. Post-translationally, proteolytically cleaved by caspase-3 during apoptosis. Proteolytic cleavage results in kinase activation and nuclear translocation of the truncated form (MST1/N). In terms of processing, ubiquitinated by TRIM69; leading to its redistribution to the perinuclear cytoskeleton.

It localises to the cytoplasm. The protein resides in the nucleus. The catalysed reaction is L-seryl-[protein] + ATP = O-phospho-L-seryl-[protein] + ADP + H(+). The enzyme catalyses L-threonyl-[protein] + ATP = O-phospho-L-threonyl-[protein] + ADP + H(+). Its activity is regulated as follows. Inhibited by the C-terminal non-catalytic region. Activated by caspase-cleavage. Full activation also requires homodimerization and autophosphorylation of Thr-180, which are inhibited by the proto-oncogene product RAF1. Activated by RASSF1 which acts by preventing its dephosphorylation. When autophosphorylated at Thr-180, recruits STRIPAK complex and promotes PP2A-mediated dephosphorylation and inactivation of STK3. Functionally, stress-activated, pro-apoptotic kinase which, following caspase-cleavage, enters the nucleus and induces chromatin condensation followed by internucleosomal DNA fragmentation. Key component of the Hippo signaling pathway which plays a pivotal role in organ size control and tumor suppression by restricting proliferation and promoting apoptosis. The core of this pathway is composed of a kinase cascade wherein STK3/MST2 and STK4/MST1, in complex with its regulatory protein SAV1, phosphorylates and activates LATS1/2 in complex with its regulatory protein MOB1, which in turn phosphorylates and inactivates YAP1 oncoprotein and WWTR1/TAZ. Phosphorylation of YAP1 by LATS2 inhibits its translocation into the nucleus to regulate cellular genes important for cell proliferation, cell death, and cell migration. STK3/MST2 and STK4/MST1 are required to repress proliferation of mature hepatocytes, to prevent activation of facultative adult liver stem cells (oval cells), and to inhibit tumor formation. Phosphorylates NKX2-1. Phosphorylates NEK2 and plays a role in centrosome disjunction by regulating the localization of NEK2 to centrosomes, and its ability to phosphorylate CROCC and CEP250. In conjunction with SAV1, activates the transcriptional activity of ESR1 through the modulation of its phosphorylation. Positively regulates RAF1 activation via suppression of the inhibitory phosphorylation of RAF1 on 'Ser-259'. Phosphorylates MOBKL1A and RASSF2. Phosphorylates MOBKL1B on 'Thr-74'. Acts cooperatively with MOBKL1B to activate STK38. In Mus musculus (Mouse), this protein is Serine/threonine-protein kinase 3 (Stk3).